The primary structure comprises 75 residues: Conotoxin VnMSGL-0111 (75 aa).

An N-terminal signal peptide occupies residues 1–20; sequence MSGLEIMVLTLLLLVSMATS. The propeptide occupies 21 to 44; sequence HQDGGEKQATQRDAINVRRRSITR. 3 disulfides stabilise this stretch: cysteine 48–cysteine 60, cysteine 52–cysteine 69, and cysteine 59–cysteine 73.

It belongs to the conotoxin O3 superfamily. Expressed by the venom duct.

Its subcellular location is the secreted. In Conus ventricosus (Mediterranean cone), this protein is Conotoxin VnMSGL-0111.